A 402-amino-acid chain; its full sequence is Type II NADH:quinone oxidoreductase (402 aa).

FAD is bound by residues 12–16 (GAGYA), 39–40 (NK), and Val-83. The active site involves Glu-172. FAD is bound by residues Asp-302, 319–320 (AQ), and Lys-379.

The protein belongs to the NADH dehydrogenase family. Requires FAD as cofactor.

It localises to the cell membrane. It catalyses the reaction a quinone + NADH + H(+) = a quinol + NAD(+). Its function is as follows. Alternative, nonproton pumping NADH:quinone oxidoreductase that delivers electrons to the respiratory chain by oxidation of NADH and reduction of quinones, and contributes to the regeneration of NAD(+). The sequence is that of Type II NADH:quinone oxidoreductase from Staphylococcus epidermidis (strain ATCC 12228 / FDA PCI 1200).